The sequence spans 98 residues: Feather keratin 1 (98 aa).

Belongs to the avian keratin family. As to quaternary structure, the avian keratins (F-ker, S-ker, C-ker and B-ker) are a complex mixture of very similar polypeptides.

The sequence is that of Feather keratin 1 from Gallus gallus (Chicken).